A 324-amino-acid chain; its full sequence is Myb-like DNA-binding protein myb-1 (324 aa).

HTH myb-type domains are found at residues 4–59 (MPDQ…KPGL) and 60–110 (NHGP…NRKK). Positions 107–231 (NRKKNQLRRQ…PTGSTLRLLT (125 aa)) are disordered. Residues 155 to 165 (RRPSSPSSFND) show a composition bias toward polar residues. Positions 166 to 175 (SLHHRVHESI) are enriched in basic and acidic residues. Low complexity-rich tracts occupy residues 183 to 192 (QQQQQQQQQQ) and 222 to 231 (PTGSTLRLLT).

It localises to the nucleus. This chain is Myb-like DNA-binding protein myb-1 (rca-1), found in Neurospora crassa (strain ATCC 24698 / 74-OR23-1A / CBS 708.71 / DSM 1257 / FGSC 987).